The following is a 142-amino-acid chain: Small ribosomal subunit protein bS6 (142 aa).

The interval 110–142 is disordered; the sequence is NKKPSHAKEKHEKTEHAHSHHAEEAKSTESHSE.

It belongs to the bacterial ribosomal protein bS6 family.

Functionally, binds together with bS18 to 16S ribosomal RNA. In Helicobacter pylori (strain G27), this protein is Small ribosomal subunit protein bS6.